Reading from the N-terminus, the 462-residue chain is Cysteine--tRNA ligase (462 aa).

Cys-29 provides a ligand contact to Zn(2+). The 'HIGH' region signature appears at Pro-31 to Asn-41. Residues Cys-211, His-236, and Glu-240 each contribute to the Zn(2+) site. The short motif at Lys-269–Ser-273 is the 'KMSKS' region element. An ATP-binding site is contributed by Lys-272.

The protein belongs to the class-I aminoacyl-tRNA synthetase family. As to quaternary structure, monomer. The cofactor is Zn(2+).

The protein resides in the cytoplasm. The enzyme catalyses tRNA(Cys) + L-cysteine + ATP = L-cysteinyl-tRNA(Cys) + AMP + diphosphate. This chain is Cysteine--tRNA ligase, found in Caulobacter sp. (strain K31).